Consider the following 315-residue polypeptide: Replication factor C small subunit (315 aa).

ATP is bound at residue 43–50; that stretch reads GSPGVGKT.

Belongs to the activator 1 small subunits family. RfcS subfamily. In terms of assembly, heteromultimer composed of small subunits (RfcS) and large subunits (RfcL).

Functionally, part of the RFC clamp loader complex which loads the PCNA sliding clamp onto DNA. In Methanococcus maripaludis (strain C7 / ATCC BAA-1331), this protein is Replication factor C small subunit.